The chain runs to 368 residues: uncharacterized protein (368 aa).

Disordered stretches follow at residues 1–22 (MEKS…LPEK) and 282–317 (KHLG…EPPA). Positions 293-311 (KRVEKMKKAYKESKEEKAS) are enriched in basic and acidic residues.

This is an uncharacterized protein from Mus musculus (Mouse).